The primary structure comprises 290 residues: MVQLHVKRGDESQFLFNTTVDVQIETLTQQICEIYNARLKVDRICTEIPELADHGISLPPNMQGLTDDQIVELKLKDEWEERCIPSGGAEFKKDEIGRRNGHAPNEKMKDVLRRTMEEAKALISKKQLQANVCVTMEMVKEALDQLRGAVMIVYPMGLPPHDPIRMEIENQEDLTGTQASLQVITNEEAQLWWASKELHRGKKLQDYIGKNEKTKIIVKIQKRGQGAPAREPVVSEDEQKQMMLHYYKRQEELKKLEEADDDTHLQSEWSDRQALKRQFQGLTNIKWGPR.

This sequence belongs to the CFAP298 family. As to quaternary structure, interacts with dnaaf1/swt. Interacts with lrrc6/sea. Interacts with dvl (via DEP and PDZ domains). In terms of tissue distribution, strongly expressed in ciliated tissues of the embryonic trunk, including the pronephric ducts and spinal canal.

Its subcellular location is the cytoplasm. The protein localises to the cytoskeleton. It is found in the cilium basal body. In terms of biological role, plays a role in motile cilium function, possibly by acting on outer dynein arm assembly. Seems to be important for initiation rather than maintenance of cilium motility. Required for correct positioning of cilia at the apical cell surface, suggesting an additional role in the planar cell polarity (PCP) pathway. May suppress canonical Wnt signaling activity. This Danio rerio (Zebrafish) protein is Cilia- and flagella-associated protein 298.